The chain runs to 743 residues: Homeobox-leucine zipper protein PROTODERMAL FACTOR 2 (743 aa).

The segment at 1–72 (MYHPNMFESH…KKRYHRHTQR (72 aa)) is disordered. Residues 30–39 (SREDDFETKS) are compositionally biased toward basic and acidic residues. Basic residues predominate over residues 60-71 (PNKKKRYHRHTQ). The homeobox DNA-binding region spans 62 to 121 (KKKRYHRHTQRQIQELESFFKECPHPDDKQRKELSRDLNLEPLQVKFWFQNKRTQMKAQS). A coiled-coil region spans residues 110-192 (FQNKRTQMKA…DRISAIAAKY (83 aa)). An START domain is found at 244–476 (SETDKPIIVE…LERQCERLAS (233 aa)).

The protein belongs to the HD-ZIP homeobox family. Class IV subfamily. Interacts with GAI/RGA2, RGA/RGA1/GRS, RGL2/SCL19 and ATML1. Binds to AIL7/PLT7, ANT, BBM and AIL1. As to expression, specifically expressed in the layer 1 (L1) of shoot meristems.

Its subcellular location is the nucleus. In terms of biological role, probable transcription factor that binds to the L1 box DNA sequence 5'-TAAATG[CT]A-3'. Plays a role in maintaining the identity of L1 cells, possibly by interacting with their L1 box or other target-gene promoters; binds to the LIP1 gene promoter and stimulates its expression upon imbibition. Acts as a positive regulator of gibberellins (GAs)-regulated epidermal gene expression (e.g. LIP1, LIP2, LTP1, FDH and PDF1). Functionally redundant to ATML1. Involved, together with HDG proteins (e.g. HDG1, HDG2, HDG5 and HDG12), in the regulation of flower organs development by promoting the expression of APETALA 3 (AP3) in the epidermis and internal cell layers of developing flowers. Seems to promote cell differentiation. This chain is Homeobox-leucine zipper protein PROTODERMAL FACTOR 2, found in Arabidopsis thaliana (Mouse-ear cress).